We begin with the raw amino-acid sequence, 205 residues long: uncharacterized protein (205 aa).

This is an uncharacterized protein from Bacillus subtilis (strain 168).